Consider the following 727-residue polypeptide: Catalase-peroxidase (727 aa).

The disordered stretch occupies residues 1-24 (MDQKSDSAGKCPVAHTAPRGRSNR). Residues 95-217 (WHSAGTYRIT…LAAVQMGLIY (123 aa)) constitute a cross-link (tryptophyl-tyrosyl-methioninium (Trp-Tyr) (with M-243)). The Proton acceptor role is filled by H96. The tryptophyl-tyrosyl-methioninium (Tyr-Met) (with W-95) cross-link spans 217-243 (YVNPEGPNGNPDPVAAARDIRETFARM). Residue H258 participates in heme b binding.

It belongs to the peroxidase family. Peroxidase/catalase subfamily. In terms of assembly, homodimer or homotetramer. Heme b serves as cofactor. In terms of processing, formation of the three residue Trp-Tyr-Met cross-link is important for the catalase, but not the peroxidase activity of the enzyme.

It catalyses the reaction H2O2 + AH2 = A + 2 H2O. The enzyme catalyses 2 H2O2 = O2 + 2 H2O. Bifunctional enzyme with both catalase and broad-spectrum peroxidase activity. In Rhizobium meliloti (strain 1021) (Ensifer meliloti), this protein is Catalase-peroxidase.